A 258-amino-acid polypeptide reads, in one-letter code: PHD finger protein ALFIN-LIKE 5 (258 aa).

The tract at residues 143–205 is disordered; that stretch reads AKKQTKEKAP…EEEERDNTLC (63 aa). The segment covering 152–165 has biased composition (polar residues); the sequence is PNSTNKPNKPSSKM. A compositionally biased stretch (acidic residues) spans 184-200; sequence DDDESGDEYADEEEEER. The PHD-type zinc finger occupies 202–254; sequence NTLCGSCGTNDGKDEFWICCDSCERWYHGKCVKITPARAEHIKHYKCPDCGNK.

It belongs to the Alfin family.

It is found in the nucleus. Its function is as follows. Histone-binding component that specifically recognizes H3 tails trimethylated on 'Lys-4' (H3K4me3), which mark transcription start sites of virtually all active genes. The polypeptide is PHD finger protein ALFIN-LIKE 5 (Oryza sativa subsp. indica (Rice)).